Consider the following 510-residue polypeptide: Dolichyl-P-Man:Man5GlcNAc2-PP-dolichol alpha-1,3-mannosyltransferase Alg3 (510 aa).

Residues 1 to 43 lie on the Cytoplasmic side of the membrane; that stretch reads MAPPKAASHRPAVRRKKSGTLVDSILDKYLNVRFFKYLLLEPA. A helical membrane pass occupies residues 44 to 64; sequence ALPIVGLFVLLAELVINVVVI. At 65-97 the chain is on the lumenal side; it reads QRVPYTEIDWVAYMQECEGFLNGTTNYSLLRGD. Residues 98-118 traverse the membrane as a helical segment; the sequence is TGPLVYPAAFVYIYSALYYVT. The Cytoplasmic portion of the chain corresponds to 119-125; that stretch reads SHGTNVR. Residues 126–146 form a helical membrane-spanning segment; the sequence is LAQYIFAGIYLLQLALVLRLY. At 147–171 the chain is on the lumenal side; it reads SKSRKVPPYVLVLSAFTSYRIHSIY. The helical transmembrane segment at 172-192 threads the bilayer; sequence VLRLFNDPVAVLLLYAALNLF. The Cytoplasmic segment spans residues 193–211; it reads LDRRWTLGSTFFSLAVGVK. A helical transmembrane segment spans residues 212-232; it reads MNILLFAPALLLFYLANLGLL. Arginine 233 is a topological domain (lumenal). A helical transmembrane segment spans residues 234-254; it reads TILQLAVCGVIQLLLGAPFLL. Over 255-294 the chain is Cytoplasmic; the sequence is THPVEYLRGSFDLGRIFEHKWTVNYRFLSRDVFENRTFHV. The helical transmembrane segment at 295–315 threads the bilayer; it reads SLLGLHLLLLLAFAKPIWTFF. Over 316-403 the chain is Lumenal; sequence QSYVRLRRIE…YGIHFDRCTQ (88 aa). The disordered stretch occupies residues 337–358; it reads LQLKAQKRPKKVEKDKDKDQKK. A compositionally biased stretch (basic and acidic residues) spans 348-358; the sequence is VEKDKDKDQKK. Residues 404 to 424 form a helical membrane-spanning segment; sequence LALLPFFLCNLVGVACSRSLH. The Cytoplasmic segment spans residues 425–426; sequence YQ. The chain crosses the membrane as a helical span at residues 427 to 447; that stretch reads FYVWYFHSLPYLAWSTPYSLG. The Lumenal portion of the chain corresponds to 448–464; the sequence is VRCLILGLIEYCWNTYP. A helical membrane pass occupies residues 465-485; that stretch reads STNFSSAALHFTHIILLAGVA. The Cytoplasmic portion of the chain corresponds to 486 to 510; the sequence is KQLIQTMRINNAAKREQQEQQKKLQ.

It belongs to the glycosyltransferase ALG3 family.

Its subcellular location is the endoplasmic reticulum membrane. The enzyme catalyses an alpha-D-Man-(1-&gt;2)-alpha-D-Man-(1-&gt;2)-alpha-D-Man-(1-&gt;3)-[alpha-D-Man-(1-&gt;6)]-beta-D-Man-(1-&gt;4)-beta-D-GlcNAc-(1-&gt;4)-alpha-D-GlcNAc-diphospho-di-trans,poly-cis-dolichol + a di-trans,poly-cis-dolichyl beta-D-mannosyl phosphate = an alpha-D-Man-(1-&gt;2)-alpha-D-Man-(1-&gt;2)-alpha-D-Man-(1-&gt;3)-[alpha-D-Man-(1-&gt;3)-alpha-D-Man-(1-&gt;6)]-beta-D-Man-(1-&gt;4)-beta-D-GlcNAc-(1-&gt;4)-alpha-D-GlcNAc-diphospho-di-trans,poly-cis-dolichol + a di-trans,poly-cis-dolichyl phosphate + H(+). The protein operates within protein modification; protein glycosylation. Its function is as follows. Probable alpha-1,3-mannosyltransferase involved in the N-glycosylation pathway. Involved in glycosylation of the TNF receptor grnd, regulating its ligand affinity. Required for normal epithelial growth and architecture. Suppressor of JNK-dependent intestinal stem cell proliferation. This Drosophila melanogaster (Fruit fly) protein is Dolichyl-P-Man:Man5GlcNAc2-PP-dolichol alpha-1,3-mannosyltransferase Alg3.